Consider the following 72-residue polypeptide: Threonine dehydratase operon activator protein (72 aa).

In terms of biological role, probable trans-acting positive activator for the tdc operon. The polypeptide is Threonine dehydratase operon activator protein (tdcR) (Escherichia coli (strain K12)).